The chain runs to 488 residues: Probable cytosol aminopeptidase (488 aa).

Positions 251 and 256 each coordinate Mn(2+). Lys263 is a catalytic residue. Mn(2+)-binding residues include Asp274, Asp333, and Glu335. Residue Arg337 is part of the active site.

It belongs to the peptidase M17 family. Mn(2+) serves as cofactor.

The protein resides in the cytoplasm. The catalysed reaction is Release of an N-terminal amino acid, Xaa-|-Yaa-, in which Xaa is preferably Leu, but may be other amino acids including Pro although not Arg or Lys, and Yaa may be Pro. Amino acid amides and methyl esters are also readily hydrolyzed, but rates on arylamides are exceedingly low.. The enzyme catalyses Release of an N-terminal amino acid, preferentially leucine, but not glutamic or aspartic acids.. Presumably involved in the processing and regular turnover of intracellular proteins. Catalyzes the removal of unsubstituted N-terminal amino acids from various peptides. In Cenarchaeum symbiosum (strain A), this protein is Probable cytosol aminopeptidase.